The chain runs to 238 residues: uncharacterized protein (238 aa).

This sequence to M.thermoautotrophicum MTH564.

This is an uncharacterized protein from Methanocaldococcus jannaschii (strain ATCC 43067 / DSM 2661 / JAL-1 / JCM 10045 / NBRC 100440) (Methanococcus jannaschii).